The primary structure comprises 78 residues: Dermaseptin-B1 (78 aa).

The signal sequence occupies residues 1–22 (MDILKKSLFLVLFLGLVSLSIC). Positions 23–42 (EEEKRENEDEEKQDDEQSEM) are excised as a propeptide. Gln-75 carries the glutamine amide modification. Residues 76–78 (GEQ) constitute a propeptide that is removed on maturation.

The protein belongs to the frog skin active peptide (FSAP) family. Dermaseptin subfamily. Expressed by the skin glands.

It localises to the secreted. Its function is as follows. Possesses a potent antimicrobial activity against bacteria, fungi and protozoa. Probably acts by disturbing membrane functions with its amphipathic structure. In Phyllomedusa bicolor (Two-colored leaf frog), this protein is Dermaseptin-B1.